We begin with the raw amino-acid sequence, 672 residues long: DNA ligase (672 aa).

NAD(+) contacts are provided by residues 35–39 (DAQYD), 84–85 (SL), and glutamate 115. Lysine 117 (N6-AMP-lysine intermediate) is an active-site residue. Arginine 138, glutamate 178, lysine 294, and lysine 318 together coordinate NAD(+). Cysteine 412, cysteine 415, cysteine 430, and cysteine 435 together coordinate Zn(2+). Residues 592 to 672 (ATGGPFVGKS…AFLQMLQTNA (81 aa)) form the BRCT domain.

The protein belongs to the NAD-dependent DNA ligase family. LigA subfamily. Requires Mg(2+) as cofactor. Mn(2+) serves as cofactor.

It catalyses the reaction NAD(+) + (deoxyribonucleotide)n-3'-hydroxyl + 5'-phospho-(deoxyribonucleotide)m = (deoxyribonucleotide)n+m + AMP + beta-nicotinamide D-nucleotide.. Functionally, DNA ligase that catalyzes the formation of phosphodiester linkages between 5'-phosphoryl and 3'-hydroxyl groups in double-stranded DNA using NAD as a coenzyme and as the energy source for the reaction. It is essential for DNA replication and repair of damaged DNA. This Myxococcus xanthus (strain DK1622) protein is DNA ligase.